The chain runs to 127 residues: Glycine cleavage system H protein (127 aa).

The 83-residue stretch at 22–104 (EVVIGITHFA…YEGAWMVKVE (83 aa)) folds into the Lipoyl-binding domain. Lys63 is modified (N6-lipoyllysine).

It belongs to the GcvH family. The glycine cleavage system is composed of four proteins: P, T, L and H. (R)-lipoate serves as cofactor.

Functionally, the glycine cleavage system catalyzes the degradation of glycine. The H protein shuttles the methylamine group of glycine from the P protein to the T protein. In terms of biological role, is also involved in protein lipoylation via its role as an octanoyl/lipoyl carrier protein intermediate. This is Glycine cleavage system H protein from Bacillus cereus (strain B4264).